The sequence spans 338 residues: Tryptophan--tRNA ligase (338 aa).

Residues 11-13 and 19-20 each bind ATP; these read QPS and GN. Residues 12–20 carry the 'HIGH' region motif; sequence PSGELSIGN. Aspartate 135 is a binding site for L-tryptophan. ATP is bound by residues 147–149, valine 189, and 198–202; these read GSD and KMSKS. Positions 198 to 202 match the 'KMSKS' region motif; the sequence is KMSKS.

It belongs to the class-I aminoacyl-tRNA synthetase family. As to quaternary structure, homodimer.

Its subcellular location is the cytoplasm. It catalyses the reaction tRNA(Trp) + L-tryptophan + ATP = L-tryptophyl-tRNA(Trp) + AMP + diphosphate + H(+). Catalyzes the attachment of tryptophan to tRNA(Trp). This chain is Tryptophan--tRNA ligase, found in Vibrio parahaemolyticus serotype O3:K6 (strain RIMD 2210633).